Here is a 753-residue protein sequence, read N- to C-terminus: 5-methyltetrahydropteroyltriglutamate--homocysteine methyltransferase (753 aa).

5-methyltetrahydropteroyltri-L-glutamate contacts are provided by residues 17-20 and Lys-117; that span reads RELK. L-homocysteine contacts are provided by residues 431–433 and Glu-484; that span reads IGS. Residues 431–433 and Glu-484 each bind L-methionine; that span reads IGS. 5-methyltetrahydropteroyltri-L-glutamate is bound by residues 515–516 and Trp-561; that span reads RC. Asp-599 serves as a coordination point for L-homocysteine. L-methionine is bound at residue Asp-599. Glu-605 serves as a coordination point for 5-methyltetrahydropteroyltri-L-glutamate. The Zn(2+) site is built by His-641, Cys-643, and Glu-665. Catalysis depends on His-694, which acts as the Proton donor. Position 726 (Cys-726) interacts with Zn(2+).

The protein belongs to the vitamin-B12 independent methionine synthase family. Zn(2+) serves as cofactor.

The enzyme catalyses 5-methyltetrahydropteroyltri-L-glutamate + L-homocysteine = tetrahydropteroyltri-L-glutamate + L-methionine. It functions in the pathway amino-acid biosynthesis; L-methionine biosynthesis via de novo pathway; L-methionine from L-homocysteine (MetE route): step 1/1. In terms of biological role, catalyzes the transfer of a methyl group from 5-methyltetrahydrofolate to homocysteine resulting in methionine formation. The polypeptide is 5-methyltetrahydropteroyltriglutamate--homocysteine methyltransferase (Escherichia coli O9:H4 (strain HS)).